A 93-amino-acid polypeptide reads, in one-letter code: Probable Fe(2+)-trafficking protein (93 aa).

The protein belongs to the Fe(2+)-trafficking protein family.

Its function is as follows. Could be a mediator in iron transactions between iron acquisition and iron-requiring processes, such as synthesis and/or repair of Fe-S clusters in biosynthetic enzymes. The protein is Probable Fe(2+)-trafficking protein of Acidithiobacillus ferrooxidans (strain ATCC 23270 / DSM 14882 / CIP 104768 / NCIMB 8455) (Ferrobacillus ferrooxidans (strain ATCC 23270)).